Consider the following 84-residue polypeptide: Small ribosomal subunit protein uS17 (84 aa).

This sequence belongs to the universal ribosomal protein uS17 family. Part of the 30S ribosomal subunit.

Its function is as follows. One of the primary rRNA binding proteins, it binds specifically to the 5'-end of 16S ribosomal RNA. This is Small ribosomal subunit protein uS17 from Clostridium botulinum (strain ATCC 19397 / Type A).